A 178-amino-acid chain; its full sequence is Actin-related protein 2/3 complex subunit 3-A (178 aa).

Belongs to the ARPC3 family. In terms of assembly, component of the Arp2/3 complex composed of actr2/arp2, actr3/arp3, arpc1 (arpc1a or arpc1b), arpc2, arpc3, arpc4 and arpc5.

The protein resides in the cytoplasm. It localises to the cytoskeleton. The protein localises to the cell projection. Its subcellular location is the nucleus. Component of the Arp2/3 complex, a multiprotein complex that mediates actin polymerization upon stimulation by nucleation-promoting factor (NPF). The Arp2/3 complex mediates the formation of branched actin networks in the cytoplasm, providing the force for cell motility. In addition to its role in the cytoplasmic cytoskeleton, the Arp2/3 complex also promotes actin polymerization in the nucleus, thereby regulating gene transcription and repair of damaged DNA. The Arp2/3 complex promotes homologous recombination (HR) repair in response to DNA damage by promoting nuclear actin polymerization, leading to drive motility of double-strand breaks (DSBs). The polypeptide is Actin-related protein 2/3 complex subunit 3-A (arpc3-a) (Xenopus laevis (African clawed frog)).